The primary structure comprises 338 residues: Large ribosomal subunit protein uL3 (338 aa).

4 disordered regions span residues 1–44 (MPQP…GFAG), 151–170 (AVPS…VGGG), 206–259 (VTKG…GQTG), and 312–338 (FRPA…SNQG). Positions 22 to 31 (SETPRFNSWP) are enriched in polar residues. Basic residues predominate over residues 220–237 (GVQKRKGKHARQGWRRRI). Residues 247–259 (RVRSTVPQQGQTG) show a composition bias toward polar residues.

The protein belongs to the universal ribosomal protein uL3 family. As to quaternary structure, part of the 50S ribosomal subunit. Forms a cluster with proteins L14 and L24e. Interacts weakly with protein L13.

Its function is as follows. One of the primary rRNA binding proteins, it binds directly near the 3'-end of the 23S rRNA, where it nucleates assembly of the 50S subunit. This chain is Large ribosomal subunit protein uL3 (rpl3), found in Haloarcula marismortui (strain ATCC 43049 / DSM 3752 / JCM 8966 / VKM B-1809) (Halobacterium marismortui).